The following is a 724-amino-acid chain: Protein-glutamine gamma-glutamyltransferase 5 (724 aa).

N-acetylalanine is present on A2. Active-site residues include C283, H342, and D365. Residues N405, D407, E453, and E458 each contribute to the Ca(2+) site. Polar residues-rich tracts occupy residues 473 to 486 (RSQGPHQANSNPFS) and 495 to 505 (ARSPDSPSLQP). A disordered region spans residues 473–505 (RSQGPHQANSNPFSSVPPRHNSARSPDSPSLQP).

It belongs to the transglutaminase superfamily. Transglutaminase family. The cofactor is Ca(2+).

It is found in the cytoplasm. The catalysed reaction is L-glutaminyl-[protein] + L-lysyl-[protein] = [protein]-L-lysyl-N(6)-5-L-glutamyl-[protein] + NH4(+). Catalyzes the cross-linking of proteins and the conjugation of polyamines to proteins. Contributes to the formation of the cornified cell envelope of keratinocytes. In Mus musculus (Mouse), this protein is Protein-glutamine gamma-glutamyltransferase 5 (Tgm5).